The sequence spans 444 residues: Phosphoglucosamine mutase (444 aa).

Residue Ser102 is the Phosphoserine intermediate of the active site. Mg(2+)-binding residues include Ser102, Asp241, Asp243, and Asp245. Phosphoserine is present on Ser102.

It belongs to the phosphohexose mutase family. Mg(2+) serves as cofactor. Post-translationally, activated by phosphorylation.

It carries out the reaction alpha-D-glucosamine 1-phosphate = D-glucosamine 6-phosphate. Its function is as follows. Catalyzes the conversion of glucosamine-6-phosphate to glucosamine-1-phosphate. The sequence is that of Phosphoglucosamine mutase from Paracidovorax citrulli (strain AAC00-1) (Acidovorax citrulli).